A 551-amino-acid chain; its full sequence is MFS-type transporter ATEG_00331 (551 aa).

An N-terminal signal peptide occupies residues 1–18 (MKAWLLVSSLCLSTFIAA). A run of 4 helical transmembrane segments spans residues 40–60 (LEFT…TPPW), 71–91 (PVLM…ALAI), 102–122 (IQGT…GDVF), and 132–152 (GVLG…GGAF). N165 and N178 each carry an N-linked (GlcNAc...) asparagine glycan. Helical transmembrane passes span 179–199 (LTTS…FLEV), 206–228 (IIEG…TVMF), 233–255 (GYGG…FGIG), 324–344 (VYLL…GLYI), 354–374 (IYFG…LQPY), 380–400 (IIIF…APII), 417–437 (TVFF…GVIF), and 493–513 (SEWI…VFIS). N524 is a glycosylation site (N-linked (GlcNAc...) asparagine).

The protein belongs to the major facilitator superfamily. TCR/Tet family.

It is found in the membrane. Its function is as follows. MFS-type transporter; part of the gene cluster that mediates the biosynthesis of isoflavipucine. The protein is MFS-type transporter ATEG_00331 of Aspergillus terreus (strain NIH 2624 / FGSC A1156).